Reading from the N-terminus, the 256-residue chain is Putative transposase for insertion sequence element IS112 (256 aa).

This sequence belongs to the transposase 11 family.

Functionally, involved in the transposition of the insertion sequence IS112 which inactivates the SalI restriction-modification system. This chain is Putative transposase for insertion sequence element IS112, found in Streptomyces albus G.